Here is a 99-residue protein sequence, read N- to C-terminus: Large ribosomal subunit protein uL23 (99 aa).

The protein belongs to the universal ribosomal protein uL23 family. As to quaternary structure, part of the 50S ribosomal subunit. Contacts protein L29, and trigger factor when it is bound to the ribosome.

Its function is as follows. One of the early assembly proteins it binds 23S rRNA. One of the proteins that surrounds the polypeptide exit tunnel on the outside of the ribosome. Forms the main docking site for trigger factor binding to the ribosome. This is Large ribosomal subunit protein uL23 from Shewanella loihica (strain ATCC BAA-1088 / PV-4).